The following is a 273-amino-acid chain: MMAARMMAAGLAATALSAHAFRIPTPGEQDARIQTVPYHPEEVVLVRAWNGYVTRIVFDEQEKIIDVAAGFADGWQFSPEGNVLYIKAKSFPAQGSPAQAPEPGLWNTNLLVKTDRRLYDFDLVLASADAATPQALQRSRMAYRLQFRYPAAPQAASRASPVGPAVPAGALNRRYAMQVGNGSDGIAPIAAYDDGRHTWLTFRPGQPFPAVFAVAPDGTETLVNLHIDNQSLVIHRVAPVLMLRSGASVIRIVNQNGDASASPAFECHAEPAL.

The signal sequence occupies residues 1–20; that stretch reads MMAARMMAAGLAATALSAHA.

This sequence belongs to the TrbG/VirB9 family.

The protein resides in the cell outer membrane. This chain is Type IV secretion system protein PtlF homolog (ptlF), found in Bordetella bronchiseptica (strain ATCC BAA-588 / NCTC 13252 / RB50) (Alcaligenes bronchisepticus).